The sequence spans 217 residues: DNA repair protein homolog YobH (217 aa).

The region spanning 1–68 (MAKAIQSSMW…RPLSKMWGIG (68 aa)) is the UmuC domain.

Belongs to the DNA polymerase type-Y family.

The polypeptide is DNA repair protein homolog YobH (yobH) (Bacillus subtilis (strain 168)).